The primary structure comprises 665 residues: Ribonuclease R 2 (665 aa).

In terms of domain architecture, RNB spans 202–528; that stretch reads REDYRNEITY…LIIHRLLHLY (327 aa). The S1 motif domain occupies 579–662; that stretch reads GEVYTGTITG…RKGTVDFEQI (84 aa).

Belongs to the RNR ribonuclease family. RNase R subfamily.

The protein resides in the cytoplasm. The enzyme catalyses Exonucleolytic cleavage in the 3'- to 5'-direction to yield nucleoside 5'-phosphates.. Functionally, 3'-5' exoribonuclease that releases 5'-nucleoside monophosphates and is involved in maturation of structured RNAs. The protein is Ribonuclease R 2 of Lactococcus lactis subsp. lactis (strain IL1403) (Streptococcus lactis).